A 185-amino-acid polypeptide reads, in one-letter code: Ribosome-recycling factor (185 aa).

Belongs to the RRF family.

It is found in the cytoplasm. Functionally, responsible for the release of ribosomes from messenger RNA at the termination of protein biosynthesis. May increase the efficiency of translation by recycling ribosomes from one round of translation to another. The chain is Ribosome-recycling factor from Nocardioides sp. (strain ATCC BAA-499 / JS614).